We begin with the raw amino-acid sequence, 449 residues long: Neuraminidase (449 aa).

The Intravirion portion of the chain corresponds to 1–6 (MNPNQK). Residues 7–27 (IITIGSICMVIGIVSLMLQIG) form a helical membrane-spanning segment. The segment at 11-33 (GSICMVIGIVSLMLQIGNIISIW) is involved in apical transport and lipid raft association. Topologically, residues 28-449 (NIISIWVSHS…GAELPFTIDK (422 aa)) are virion surface. Residues 36-70 (HSIQTGNQHQAEPISNTNFLTEKAVASVTLAGNSS) form a hypervariable stalk region region. Asn68 carries N-linked (GlcNAc...) asparagine; by host glycosylation. Residues 71–449 (LCPISGWAVH…GAELPFTIDK (379 aa)) form a head of neuraminidase region. 8 cysteine pairs are disulfide-bonded: Cys72-Cys397, Cys104-Cys109, Cys164-Cys211, Cys213-Cys218, Cys259-Cys272, Cys261-Cys270, Cys298-Cys315, and Cys401-Cys426. Arg98 is a binding site for substrate. Residue Asn126 is glycosylated (N-linked (GlcNAc...) asparagine; by host). Asp131 (proton donor/acceptor) is an active-site residue. Arg132 is a substrate binding site. N-linked (GlcNAc...) asparagine; by host glycosylation is present at Asn215. Position 257 to 258 (257 to 258 (EE)) interacts with substrate. Residue Arg273 participates in substrate binding. Ca(2+)-binding residues include Asp274, Gly278, and Asp304. Substrate is bound at residue Arg348. The active-site Nucleophile is Tyr382.

It belongs to the glycosyl hydrolase 34 family. As to quaternary structure, homotetramer. Ca(2+) is required as a cofactor. N-glycosylated.

It localises to the virion membrane. Its subcellular location is the host apical cell membrane. The enzyme catalyses Hydrolysis of alpha-(2-&gt;3)-, alpha-(2-&gt;6)-, alpha-(2-&gt;8)- glycosidic linkages of terminal sialic acid residues in oligosaccharides, glycoproteins, glycolipids, colominic acid and synthetic substrates.. Its activity is regulated as follows. Inhibited by the neuraminidase inhibitors zanamivir (Relenza) and oseltamivir (Tamiflu). These drugs interfere with the release of progeny virus from infected cells and are effective against all influenza strains. Resistance to neuraminidase inhibitors is quite rare. Functionally, catalyzes the removal of terminal sialic acid residues from viral and cellular glycoconjugates. Cleaves off the terminal sialic acids on the glycosylated HA during virus budding to facilitate virus release. Additionally helps virus spread through the circulation by further removing sialic acids from the cell surface. These cleavages prevent self-aggregation and ensure the efficient spread of the progeny virus from cell to cell. Otherwise, infection would be limited to one round of replication. Described as a receptor-destroying enzyme because it cleaves a terminal sialic acid from the cellular receptors. May facilitate viral invasion of the upper airways by cleaving the sialic acid moieties on the mucin of the airway epithelial cells. Likely to plays a role in the budding process through its association with lipid rafts during intracellular transport. May additionally display a raft-association independent effect on budding. Plays a role in the determination of host range restriction on replication and virulence. Sialidase activity in late endosome/lysosome traffic seems to enhance virus replication. This is Neuraminidase from Aves (Cat).